We begin with the raw amino-acid sequence, 213 residues long: NADH dehydrogenase [ubiquinone] iron-sulfur protein 7, mitochondrial (213 aa).

The N-terminal 38 residues, 1-38 (MAALSAPGLCGFRILGLRSSVGTAVQARGVHQSVATDG), are a transit peptide targeting the mitochondrion. Residues 32–53 (QSVATDGPSSTQPALPKARAVA) are disordered. Over residues 33–44 (SVATDGPSSTQP) the composition is skewed to polar residues. Positions 88 and 89 each coordinate [4Fe-4S] cluster. Arg-111 carries the post-translational modification Hydroxyarginine. Positions 153 and 183 each coordinate [4Fe-4S] cluster.

Belongs to the complex I 20 kDa subunit family. In terms of assembly, core subunit of respiratory chain NADH dehydrogenase (Complex I) which is composed of 45 different subunits. This is a component of the iron-sulfur (IP) fragment of the enzyme. [4Fe-4S] cluster serves as cofactor. Post-translationally, hydroxylated ar Arg-111 by NDUFAF5 early in the pathway of assembly of complex I, before the formation of the juncture between peripheral and membrane arms.

It is found in the mitochondrion inner membrane. It carries out the reaction a ubiquinone + NADH + 5 H(+)(in) = a ubiquinol + NAD(+) + 4 H(+)(out). Core subunit of the mitochondrial membrane respiratory chain NADH dehydrogenase (Complex I) which catalyzes electron transfer from NADH through the respiratory chain, using ubiquinone as an electron acceptor. Essential for the catalytic activity of complex I. The polypeptide is NADH dehydrogenase [ubiquinone] iron-sulfur protein 7, mitochondrial (NDUFS7) (Gorilla gorilla gorilla (Western lowland gorilla)).